The following is a 162-amino-acid chain: Phosphopantetheine adenylyltransferase (162 aa).

A substrate-binding site is contributed by Thr-10. ATP contacts are provided by residues 10-11 (TF) and His-18. Residues Lys-42, Leu-74, and Arg-88 each contribute to the substrate site. Residues 89–91 (GLR), Glu-99, and 124–130 (FSCISST) each bind ATP.

Belongs to the bacterial CoaD family. In terms of assembly, homohexamer. It depends on Mg(2+) as a cofactor.

It localises to the cytoplasm. The catalysed reaction is (R)-4'-phosphopantetheine + ATP + H(+) = 3'-dephospho-CoA + diphosphate. It functions in the pathway cofactor biosynthesis; coenzyme A biosynthesis; CoA from (R)-pantothenate: step 4/5. Its function is as follows. Reversibly transfers an adenylyl group from ATP to 4'-phosphopantetheine, yielding dephospho-CoA (dPCoA) and pyrophosphate. The polypeptide is Phosphopantetheine adenylyltransferase (Francisella tularensis subsp. novicida (strain U112)).